The following is a 461-amino-acid chain: ATP synthase subunit beta (461 aa).

Residue 149-156 (GGAGVGKT) participates in ATP binding.

It belongs to the ATPase alpha/beta chains family. In terms of assembly, F-type ATPases have 2 components, CF(1) - the catalytic core - and CF(0) - the membrane proton channel. CF(1) has five subunits: alpha(3), beta(3), gamma(1), delta(1), epsilon(1). CF(0) has three main subunits: a(1), b(2) and c(9-12). The alpha and beta chains form an alternating ring which encloses part of the gamma chain. CF(1) is attached to CF(0) by a central stalk formed by the gamma and epsilon chains, while a peripheral stalk is formed by the delta and b chains.

It localises to the cell membrane. It carries out the reaction ATP + H2O + 4 H(+)(in) = ADP + phosphate + 5 H(+)(out). In terms of biological role, produces ATP from ADP in the presence of a proton gradient across the membrane. The catalytic sites are hosted primarily by the beta subunits. This Caldanaerobacter subterraneus subsp. tengcongensis (strain DSM 15242 / JCM 11007 / NBRC 100824 / MB4) (Thermoanaerobacter tengcongensis) protein is ATP synthase subunit beta.